A 264-amino-acid chain; its full sequence is Phosphatidylinositol transfer protein 1 (264 aa).

The segment at 151–174 (NYKETEDPTKIRSEKANRGPLEEE) is disordered. Residues 238 to 264 (VRAFELKTKEDLKKKLEEKDENKAAEK) are a coiled coil.

Belongs to the PtdIns transfer protein family. PI transfer class I subfamily. In terms of processing, phosphorylated in response to activation of rasG.

It localises to the cytoplasm. The protein resides in the golgi apparatus. Functionally, catalyzes the transfer of PtdIns and phosphatidylcholine between membranes. This is Phosphatidylinositol transfer protein 1 (pitA) from Dictyostelium discoideum (Social amoeba).